A 509-amino-acid chain; its full sequence is Heat shock 70 kDa protein 14 (509 aa).

Belongs to the heat shock protein 70 family. Component of ribosome-associated complex (RAC), a heterodimer composed of Hsp70/DnaK-type chaperone HSPA14 and Hsp40/DnaJ-type chaperone DNAJC2.

The protein resides in the cytoplasm. It is found in the cytosol. Its function is as follows. Component of the ribosome-associated complex (RAC), a complex involved in folding or maintaining nascent polypeptides in a folding-competent state. In the RAC complex, binds to the nascent polypeptide chain, while DNAJC2 stimulates its ATPase activity. This chain is Heat shock 70 kDa protein 14 (HSPA14), found in Pongo abelii (Sumatran orangutan).